Consider the following 534-residue polypeptide: Membrane-bound lytic murein transglycosylase F (534 aa).

Residues 1-24 (MQISQFNRLKRSALLFASVLLLSA) form the signal peptide. Positions 25–285 (CQIESEPKSE…TLEEKYIGHI (261 aa)) are non-LT domain. An LT domain region spans residues 287 to 534 (AFDYVDTRAF…AEQTPVPKAE (248 aa)). Residue glutamate 330 is part of the active site. A disordered region spans residues 507–534 (VSGAVEVTPPPEENAPQEAEQTPVPKAE). Over residues 520 to 534 (NAPQEAEQTPVPKAE) the composition is skewed to low complexity.

This sequence in the N-terminal section; belongs to the bacterial solute-binding protein 3 family. The protein in the C-terminal section; belongs to the transglycosylase Slt family.

It localises to the cell outer membrane. It carries out the reaction Exolytic cleavage of the (1-&gt;4)-beta-glycosidic linkage between N-acetylmuramic acid (MurNAc) and N-acetylglucosamine (GlcNAc) residues in peptidoglycan, from either the reducing or the non-reducing ends of the peptidoglycan chains, with concomitant formation of a 1,6-anhydrobond in the MurNAc residue.. Its function is as follows. Murein-degrading enzyme that degrades murein glycan strands and insoluble, high-molecular weight murein sacculi, with the concomitant formation of a 1,6-anhydromuramoyl product. Lytic transglycosylases (LTs) play an integral role in the metabolism of the peptidoglycan (PG) sacculus. Their lytic action creates space within the PG sacculus to allow for its expansion as well as for the insertion of various structures such as secretion systems and flagella. The protein is Membrane-bound lytic murein transglycosylase F of Vibrio campbellii (strain ATCC BAA-1116).